The chain runs to 354 residues: UDP-3-O-acylglucosamine N-acyltransferase (354 aa).

Histidine 258 (proton acceptor) is an active-site residue.

The protein belongs to the transferase hexapeptide repeat family. LpxD subfamily. In terms of assembly, homotrimer.

The enzyme catalyses a UDP-3-O-[(3R)-3-hydroxyacyl]-alpha-D-glucosamine + a (3R)-hydroxyacyl-[ACP] = a UDP-2-N,3-O-bis[(3R)-3-hydroxyacyl]-alpha-D-glucosamine + holo-[ACP] + H(+). It functions in the pathway bacterial outer membrane biogenesis; LPS lipid A biosynthesis. In terms of biological role, catalyzes the N-acylation of UDP-3-O-acylglucosamine using 3-hydroxyacyl-ACP as the acyl donor. Is involved in the biosynthesis of lipid A, a phosphorylated glycolipid that anchors the lipopolysaccharide to the outer membrane of the cell. In Sinorhizobium medicae (strain WSM419) (Ensifer medicae), this protein is UDP-3-O-acylglucosamine N-acyltransferase.